A 282-amino-acid polypeptide reads, in one-letter code: Phenylethanolamine N-methyltransferase (282 aa).

Ser7 carries the phosphoserine modification. Residues Tyr35, Tyr40, 79–80, Tyr85, Asp101, Asn106, 158–159, and Ala181 contribute to the S-adenosyl-L-methionine site; these read GS and DV. Glu219 and Asp267 together coordinate octopamine.

The catalysed reaction is phenylethanolamine + S-adenosyl-L-methionine = N-methylphenylethanolamine + S-adenosyl-L-homocysteine + H(+). It catalyses the reaction (R)-noradrenaline + S-adenosyl-L-methionine = (R)-adrenaline + S-adenosyl-L-homocysteine + H(+). It carries out the reaction (R)-normetanephrine + S-adenosyl-L-methionine = (R)-metanephrine + S-adenosyl-L-homocysteine + H(+). The enzyme catalyses (R)-octopamine + S-adenosyl-L-methionine = (R)-synephrine + S-adenosyl-L-homocysteine + H(+). It participates in catecholamine biosynthesis; (R)-adrenaline biosynthesis; (R)-adrenaline from (R)-noradrenaline: step 1/1. Its activity is regulated as follows. Inhibited by methyl methanethiosulfonate, phenylglyoxal, tetranitromethane and diethyl pyrocarbonate. Inhibited by 4-oxo-1,4-dihydro-quinoline-3,7-dicarboxylic acid, 4-(benzo[d][1,3]dioxol-5-ylamino)-4-oxobutanoic acid and 1,4-diaminonaphthalene-2,6-disulfonic acid. In terms of biological role, catalyzes the transmethylation of nonepinephrine (noradrenaline) to form epinephrine (adrenaline), using S-adenosyl-L-methionine as the methyl donor. Other substrates include phenylethanolamine and octopamine. Also methylates normetanephrine. The chain is Phenylethanolamine N-methyltransferase (PNMT) from Homo sapiens (Human).